Consider the following 133-residue polypeptide: DNA-directed RNA polymerase subunit omega (133 aa).

This sequence belongs to the RNA polymerase subunit omega family. The RNAP catalytic core consists of 2 alpha, 1 beta, 1 beta' and 1 omega subunit. When a sigma factor is associated with the core the holoenzyme is formed, which can initiate transcription.

It catalyses the reaction RNA(n) + a ribonucleoside 5'-triphosphate = RNA(n+1) + diphosphate. Promotes RNA polymerase assembly. Latches the N- and C-terminal regions of the beta' subunit thereby facilitating its interaction with the beta and alpha subunits. The protein is DNA-directed RNA polymerase subunit omega of Mesorhizobium japonicum (strain LMG 29417 / CECT 9101 / MAFF 303099) (Mesorhizobium loti (strain MAFF 303099)).